We begin with the raw amino-acid sequence, 215 residues long: Elongation factor Ts (215 aa).

The tract at residues 80-83 (TDFA) is involved in Mg(2+) ion dislocation from EF-Tu.

Belongs to the EF-Ts family.

It localises to the cytoplasm. Its function is as follows. Associates with the EF-Tu.GDP complex and induces the exchange of GDP to GTP. It remains bound to the aminoacyl-tRNA.EF-Tu.GTP complex up to the GTP hydrolysis stage on the ribosome. This Acetivibrio thermocellus (strain ATCC 27405 / DSM 1237 / JCM 9322 / NBRC 103400 / NCIMB 10682 / NRRL B-4536 / VPI 7372) (Clostridium thermocellum) protein is Elongation factor Ts.